The following is a 623-amino-acid chain: MKCLSYQKVRLLLRHCAHRSFLRPGKELHAVLTTSGLKKAPRSYLSNALFQFYASSGEMVTAQKLFDEIPLSEKDNVDWTTLLSSFSRYGLLVNSMKLFVEMRRKRVEIDDVSVVCLFGVCAKLEDLGFAQQGHGVAVKMGVLTSVKVCNALMDMYGKCGLVSEVKRIFEELEEKSVVSWTVVLDTVVKWEGLERGREVFHEMPERNAVAWTVMVAGYLGAGFTREVLELLAEMVFRCGHGLNFVTLCSMLSACAQSGNLVVGRWVHVYALKKEMMMGEEASYDDVMVGTALVDMYAKCGNIDSSMNVFRLMRKRNVVTWNALFSGLAMHGKGRMVIDMFPQMIREVKPDDLTFTAVLSACSHSGIVDEGWRCFHSLRFYGLEPKVDHYACMVDLLGRAGLIEEAEILMREMPVPPNEVVLGSLLGSCSVHGKVEIAERIKRELIQMSPGNTEYQILMSNMYVAEGRSDIADGLRGSLRKRGIRKIPGLSSIYVNDSVHRFSSGDRSHPRTKEIYLKLNEVIERIRSAGYVPDVSGLVSHSEGDLEEKEQALCCHSEKLAVCFGLLETKPSTPLLVFKNLRICRDCHSAMKIVSKVYDREIIIRDRNRFHQFKGGSCSCSDYW.

The transit peptide at 1–16 (MKCLSYQKVRLLLRHC) directs the protein to the mitochondrion. 11 PPR repeats span residues 42-72 (RSYLSNALFQFYASSGEMVTAQKLFDEIPLS), 75-109 (DNVDWTTLLSSFSRYGLLVNSMKLFVEMRRKRVEI), 110-144 (DDVSVVCLFGVCAKLEDLGFAQQGHGVAVKMGVLT), 145-179 (SVKVCNALMDMYGKCGLVSEVKRIFEELEEKSVVS), 180-206 (WTVVLDTVVKWEGLERGREVFHEMPER), 207-237 (NAVAWTVMVAGYLGAGFTREVLELLAEMVFR), 243-277 (NFVTLCSMLSACAQSGNLVVGRWVHVYALKKEMMM), 285-319 (DVMVGTALVDMYAKCGNIDSSMNVFRLMRKRNVVT), 320-346 (WNALFSGLAMHGKGRMVIDMFPQMIRE), 350-384 (DDLTFTAVLSACSHSGIVDEGWRCFHSLRFYGLEP), and 385-419 (KVDHYACMVDLLGRAGLIEEAEILMREMPVPPNEV). The type E motif stretch occupies residues 420 to 495 (VLGSLLGSCS…IPGLSSIYVN (76 aa)). The type E(+) motif stretch occupies residues 496–526 (DSVHRFSSGDRSHPRTKEIYLKLNEVIERIR). The tract at residues 527 to 623 (SAGYVPDVSG…GGSCSCSDYW (97 aa)) is type DYW motif.

The protein belongs to the PPR family. PCMP-H subfamily.

It is found in the mitochondrion. The polypeptide is Pentatricopeptide repeat-containing protein At5g15340, mitochondrial (PCMP-H91) (Arabidopsis thaliana (Mouse-ear cress)).